The sequence spans 120 residues: Ig heavy chain V region 36-65 (120 aa).

Positions 1–111 (VQLQQSGAEL…GGSYYFDYWG (111 aa)) constitute an Ig-like domain.

The polypeptide is Ig heavy chain V region 36-65 (Mus musculus (Mouse)).